Consider the following 145-residue polypeptide: Bacilliredoxin SERP1075 (145 aa).

This sequence belongs to the bacilliredoxin family.

In Staphylococcus epidermidis (strain ATCC 35984 / DSM 28319 / BCRC 17069 / CCUG 31568 / BM 3577 / RP62A), this protein is Bacilliredoxin SERP1075.